The primary structure comprises 249 residues: tRNA (guanine-N(7)-)-methyltransferase (249 aa).

The tract at residues 1 to 24 (MHSIPADTGHTPSRAPAGNGSPPA) is disordered. 4 residues coordinate S-adenosyl-L-methionine: Glu-81, Glu-106, Asp-133, and Asp-156. Residue Asp-156 is part of the active site. A substrate-binding site is contributed by Lys-160. The interval 162 to 167 (RHNKRR) is interaction with RNA. Substrate is bound by residues Asp-192 and 227–230 (TKFE).

It belongs to the class I-like SAM-binding methyltransferase superfamily. TrmB family.

The enzyme catalyses guanosine(46) in tRNA + S-adenosyl-L-methionine = N(7)-methylguanosine(46) in tRNA + S-adenosyl-L-homocysteine. It participates in tRNA modification; N(7)-methylguanine-tRNA biosynthesis. Its function is as follows. Catalyzes the formation of N(7)-methylguanine at position 46 (m7G46) in tRNA. This chain is tRNA (guanine-N(7)-)-methyltransferase, found in Paracidovorax citrulli (strain AAC00-1) (Acidovorax citrulli).